Consider the following 284-residue polypeptide: Pantothenate synthetase (284 aa).

30-37 (MGNLHDGH) contributes to the ATP binding site. Catalysis depends on His-37, which acts as the Proton donor. Gln-61 serves as a coordination point for (R)-pantoate. Gln-61 provides a ligand contact to beta-alanine. 149 to 152 (GEKD) lines the ATP pocket. Gln-155 provides a ligand contact to (R)-pantoate. ATP contacts are provided by residues Ile-178 and 186–189 (LSSR).

Belongs to the pantothenate synthetase family. Homodimer.

The protein resides in the cytoplasm. It catalyses the reaction (R)-pantoate + beta-alanine + ATP = (R)-pantothenate + AMP + diphosphate + H(+). It participates in cofactor biosynthesis; (R)-pantothenate biosynthesis; (R)-pantothenate from (R)-pantoate and beta-alanine: step 1/1. Catalyzes the condensation of pantoate with beta-alanine in an ATP-dependent reaction via a pantoyl-adenylate intermediate. In Salmonella newport (strain SL254), this protein is Pantothenate synthetase.